A 255-amino-acid chain; its full sequence is Vitamin B12 import ATP-binding protein BtuD (255 aa).

The ABC transporter domain occupies 2–240 (MHVKHIALGS…EGLAEVFQTQ (239 aa)). An ATP-binding site is contributed by 30-37 (GPNGSGKS).

This sequence belongs to the ABC transporter superfamily. Vitamin B12 importer (TC 3.A.1.13.1) family. In terms of assembly, the complex is composed of two ATP-binding proteins (BtuD), two transmembrane proteins (BtuC) and a solute-binding protein (BtuF).

Its subcellular location is the cell inner membrane. The catalysed reaction is an R-cob(III)alamin(out) + ATP + H2O = an R-cob(III)alamin(in) + ADP + phosphate + H(+). Its function is as follows. Part of the ABC transporter complex BtuCDF involved in vitamin B12 import. Responsible for energy coupling to the transport system. The sequence is that of Vitamin B12 import ATP-binding protein BtuD from Vibrio campbellii (strain ATCC BAA-1116).